The sequence spans 58 residues: Light-harvesting protein B-875 alpha chain (58 aa).

Topologically, residues 1–15 (MSKFYKIWMIFDPRR) are cytoplasmic. Residues 16–36 (VFVAQGVFLFLLAVMIHLILL) form a helical membrane-spanning segment. His32 lines the a bacteriochlorophyll pocket. Topologically, residues 37 to 58 (STPSYNWLEISAAKYNRVAVAE) are periplasmic.

This sequence belongs to the antenna complex alpha subunit family. In terms of assembly, the core complex is formed by different alpha and beta chains, binding bacteriochlorophyll molecules, and arranged most probably in tetrameric structures disposed around the reaction center. The non-pigmented gamma chains may constitute additional components.

It is found in the cell inner membrane. Functionally, antenna complexes are light-harvesting systems, which transfer the excitation energy to the reaction centers. In Cereibacter sphaeroides (strain ATCC 17023 / DSM 158 / JCM 6121 / CCUG 31486 / LMG 2827 / NBRC 12203 / NCIMB 8253 / ATH 2.4.1.) (Rhodobacter sphaeroides), this protein is Light-harvesting protein B-875 alpha chain (pufA).